We begin with the raw amino-acid sequence, 239 residues long: Small ribosomal subunit protein uS3c (239 aa).

A KH type-2 domain is found at isoleucine 43 to lysine 139. Positions asparagine 50–serine 80 are disordered.

It belongs to the universal ribosomal protein uS3 family. Part of the 30S ribosomal subunit.

Its subcellular location is the plastid. It localises to the chloroplast. This Agrostis stolonifera (Creeping bentgrass) protein is Small ribosomal subunit protein uS3c (rps3).